The sequence spans 368 residues: UDP-N-acetylglucosamine--N-acetylmuramyl-(pentapeptide) pyrophosphoryl-undecaprenol N-acetylglucosamine transferase (368 aa).

UDP-N-acetyl-alpha-D-glucosamine contacts are provided by residues 10-12 (TGG), asparagine 126, serine 200, isoleucine 255, and glutamine 300.

This sequence belongs to the glycosyltransferase 28 family. MurG subfamily.

The protein localises to the cell membrane. The enzyme catalyses Mur2Ac(oyl-L-Ala-gamma-D-Glu-L-Lys-D-Ala-D-Ala)-di-trans,octa-cis-undecaprenyl diphosphate + UDP-N-acetyl-alpha-D-glucosamine = beta-D-GlcNAc-(1-&gt;4)-Mur2Ac(oyl-L-Ala-gamma-D-Glu-L-Lys-D-Ala-D-Ala)-di-trans,octa-cis-undecaprenyl diphosphate + UDP + H(+). The protein operates within cell wall biogenesis; peptidoglycan biosynthesis. Functionally, cell wall formation. Catalyzes the transfer of a GlcNAc subunit on undecaprenyl-pyrophosphoryl-MurNAc-pentapeptide (lipid intermediate I) to form undecaprenyl-pyrophosphoryl-MurNAc-(pentapeptide)GlcNAc (lipid intermediate II). The chain is UDP-N-acetylglucosamine--N-acetylmuramyl-(pentapeptide) pyrophosphoryl-undecaprenol N-acetylglucosamine transferase from Lactobacillus helveticus (strain DPC 4571).